Reading from the N-terminus, the 122-residue chain is MARIAGVNIPTNKRVVIALQYIHGIGPRFAQEITKKVGIPVGRRVCELSDAEVLQIREAIDQGYKVEGDLRREVAVNVKRLMDLGCYRGLRHRRSLPVRGQRTHTNARTRKGPAKAIAGKKK.

Residues 97-122 (PVRGQRTHTNARTRKGPAKAIAGKKK) form a disordered region.

Belongs to the universal ribosomal protein uS13 family. As to quaternary structure, part of the 30S ribosomal subunit. Forms a loose heterodimer with protein S19. Forms two bridges to the 50S subunit in the 70S ribosome.

Functionally, located at the top of the head of the 30S subunit, it contacts several helices of the 16S rRNA. In the 70S ribosome it contacts the 23S rRNA (bridge B1a) and protein L5 of the 50S subunit (bridge B1b), connecting the 2 subunits; these bridges are implicated in subunit movement. Contacts the tRNAs in the A and P-sites. This is Small ribosomal subunit protein uS13 from Bartonella quintana (strain Toulouse) (Rochalimaea quintana).